The primary structure comprises 206 residues: Ribosomal RNA small subunit methyltransferase G (206 aa).

S-adenosyl-L-methionine is bound by residues Gly-71, Phe-76, 125–126 (IE), and Arg-139.

The protein belongs to the methyltransferase superfamily. RNA methyltransferase RsmG family.

The protein localises to the cytoplasm. The catalysed reaction is guanosine(527) in 16S rRNA + S-adenosyl-L-methionine = N(7)-methylguanosine(527) in 16S rRNA + S-adenosyl-L-homocysteine. Specifically methylates the N7 position of guanine in position 527 of 16S rRNA. In Cereibacter sphaeroides (strain ATCC 17029 / ATH 2.4.9) (Rhodobacter sphaeroides), this protein is Ribosomal RNA small subunit methyltransferase G.